The sequence spans 534 residues: Arginine--tRNA ligase (534 aa).

The short motif at 120-130 (ANPTGFLHLGH) is the 'HIGH' region element.

This sequence belongs to the class-I aminoacyl-tRNA synthetase family. Monomer.

It localises to the cytoplasm. The catalysed reaction is tRNA(Arg) + L-arginine + ATP = L-arginyl-tRNA(Arg) + AMP + diphosphate. The sequence is that of Arginine--tRNA ligase from Mesomycoplasma hyopneumoniae (strain 232) (Mycoplasma hyopneumoniae).